The following is a 140-amino-acid chain: uncharacterized protein (140 aa).

Residues 21–42 form a C2H2-type zinc finger; that stretch reads CPYCNYTNADVKAIKKHIKSKH.

To M.jannaschii MJECL27.

This is an uncharacterized protein from Methanocaldococcus jannaschii (strain ATCC 43067 / DSM 2661 / JAL-1 / JCM 10045 / NBRC 100440) (Methanococcus jannaschii).